A 501-amino-acid chain; its full sequence is Bifunctional purine biosynthesis protein PurH (501 aa).

The MGS-like domain occupies 1-144 (MKKRALISVF…KNFKDVVVLS (144 aa)).

This sequence belongs to the PurH family.

The enzyme catalyses (6R)-10-formyltetrahydrofolate + 5-amino-1-(5-phospho-beta-D-ribosyl)imidazole-4-carboxamide = 5-formamido-1-(5-phospho-D-ribosyl)imidazole-4-carboxamide + (6S)-5,6,7,8-tetrahydrofolate. It catalyses the reaction IMP + H2O = 5-formamido-1-(5-phospho-D-ribosyl)imidazole-4-carboxamide. It functions in the pathway purine metabolism; IMP biosynthesis via de novo pathway; 5-formamido-1-(5-phospho-D-ribosyl)imidazole-4-carboxamide from 5-amino-1-(5-phospho-D-ribosyl)imidazole-4-carboxamide (10-formyl THF route): step 1/1. Its pathway is purine metabolism; IMP biosynthesis via de novo pathway; IMP from 5-formamido-1-(5-phospho-D-ribosyl)imidazole-4-carboxamide: step 1/1. The chain is Bifunctional purine biosynthesis protein PurH from Clostridium perfringens (strain SM101 / Type A).